The following is a 355-amino-acid chain: Tyrosine recombinase XerC (355 aa).

A Core-binding (CB) domain is found at 4–89 (TQFDGDIDSF…AVRGFFAWAY (86 aa)). A disordered region spans residues 138-180 (DDGGAAAASGSGKAAGKTADKSADTVNRSEAPARADKRDNARV). Low complexity predominate over residues 141-154 (GAAAASGSGKAAGK). Residues 158 to 349 (KSADTVNRSE…SIEQLKNRYG (192 aa)) form the Tyr recombinase domain. The span at 168–178 (APARADKRDNA) shows a compositional bias: basic and acidic residues. Catalysis depends on residues R200, K224, H301, R304, and H327. The active-site O-(3'-phospho-DNA)-tyrosine intermediate is Y336.

The protein belongs to the 'phage' integrase family. XerC subfamily. In terms of assembly, forms a cyclic heterotetrameric complex composed of two molecules of XerC and two molecules of XerD.

The protein localises to the cytoplasm. Its function is as follows. Site-specific tyrosine recombinase, which acts by catalyzing the cutting and rejoining of the recombining DNA molecules. The XerC-XerD complex is essential to convert dimers of the bacterial chromosome into monomers to permit their segregation at cell division. It also contributes to the segregational stability of plasmids. In Bifidobacterium longum subsp. infantis (strain ATCC 15697 / DSM 20088 / JCM 1222 / NCTC 11817 / S12), this protein is Tyrosine recombinase XerC.